Reading from the N-terminus, the 87-residue chain is Large ribosomal subunit protein bL28 (87 aa).

Belongs to the bacterial ribosomal protein bL28 family.

In Methylacidiphilum infernorum (isolate V4) (Methylokorus infernorum (strain V4)), this protein is Large ribosomal subunit protein bL28.